Consider the following 167-residue polypeptide: NAD(P)H-quinone oxidoreductase subunit J (167 aa).

This sequence belongs to the complex I 30 kDa subunit family. NDH-1 can be composed of about 15 different subunits; different subcomplexes with different compositions have been identified which probably have different functions.

The protein localises to the cellular thylakoid membrane. It catalyses the reaction a plastoquinone + NADH + (n+1) H(+)(in) = a plastoquinol + NAD(+) + n H(+)(out). The catalysed reaction is a plastoquinone + NADPH + (n+1) H(+)(in) = a plastoquinol + NADP(+) + n H(+)(out). NDH-1 shuttles electrons from an unknown electron donor, via FMN and iron-sulfur (Fe-S) centers, to quinones in the respiratory and/or the photosynthetic chain. The immediate electron acceptor for the enzyme in this species is believed to be plastoquinone. Couples the redox reaction to proton translocation, and thus conserves the redox energy in a proton gradient. Cyanobacterial NDH-1 also plays a role in inorganic carbon-concentration. In Trichodesmium erythraeum (strain IMS101), this protein is NAD(P)H-quinone oxidoreductase subunit J.